The chain runs to 280 residues: 3-dehydroshikimate dehydratase (280 aa).

Positions 70, 102, and 142 each coordinate substrate. Mn(2+) is bound at residue Glu-142. The Proton acceptor role is filled by His-144. Substrate-binding residues include Asp-172 and His-175. Asp-172 is a Mn(2+) binding site. His-198 contacts Mn(2+). Positions 217 and 253 each coordinate substrate. Residue Glu-253 participates in Mn(2+) binding.

Homodimer. Mn(2+) is required as a cofactor.

It carries out the reaction 3-dehydroshikimate = 3,4-dihydroxybenzoate + H2O. It participates in aromatic compound metabolism; 3,4-dihydroxybenzoate biosynthesis; 3,4-dihydroxybenzoate from 3-dehydroquinate: step 2/2. The protein operates within siderophore biosynthesis; petrobactin biosynthesis. Functionally, involved in the biosynthesis of petrobactin, a catecholate siderophore that functions in both iron acquisition and virulence. Catalyzes the conversion of 3-dehydroshikimate to 3,4-dihydroxybenzoate (3,4-DHBA). In Bacillus anthracis, this protein is 3-dehydroshikimate dehydratase.